Reading from the N-terminus, the 251-residue chain is ATP synthase delta chain, chloroplastic (251 aa).

Residues 1 to 64 (MASLQHTTAS…STGGALGARM (64 aa)) constitute a chloroplast transit peptide.

Belongs to the ATPase delta chain family. F-type ATPases have 2 components, CF(1) - the catalytic core - and CF(0) - the membrane proton channel. CF(1) has five subunits: alpha(3), beta(3), gamma(1), delta(1), epsilon(1). CF(0) has three main subunits: a, b and c.

It is found in the plastid. The protein resides in the chloroplast thylakoid membrane. Its function is as follows. This protein seems to be part of the stalk that links CF(0) to CF(1). It either transmits conformational changes from CF(0) into CF(1) or is implicated in proton conduction. In Pisum sativum (Garden pea), this protein is ATP synthase delta chain, chloroplastic (ATPD).